Reading from the N-terminus, the 257-residue chain is 1-(5-phosphoribosyl)-5-[(5-phosphoribosylamino)methylideneamino] imidazole-4-carboxamide isomerase (257 aa).

Residue Asp-8 is the Proton acceptor of the active site. Catalysis depends on Asp-130, which acts as the Proton donor.

It belongs to the HisA/HisF family.

It is found in the cytoplasm. It carries out the reaction 1-(5-phospho-beta-D-ribosyl)-5-[(5-phospho-beta-D-ribosylamino)methylideneamino]imidazole-4-carboxamide = 5-[(5-phospho-1-deoxy-D-ribulos-1-ylimino)methylamino]-1-(5-phospho-beta-D-ribosyl)imidazole-4-carboxamide. The protein operates within amino-acid biosynthesis; L-histidine biosynthesis; L-histidine from 5-phospho-alpha-D-ribose 1-diphosphate: step 4/9. This Chlorobium chlorochromatii (strain CaD3) protein is 1-(5-phosphoribosyl)-5-[(5-phosphoribosylamino)methylideneamino] imidazole-4-carboxamide isomerase.